A 224-amino-acid polypeptide reads, in one-letter code: N-terminal Xaa-Pro-Lys N-methyltransferase 1 (224 aa).

Residues glycine 70, arginine 75, 92-94, 120-121, and glutamine 136 each bind S-adenosyl-L-methionine; these read DVT and LQ.

The protein belongs to the methyltransferase superfamily. NTM1 family.

Its subcellular location is the nucleus. It catalyses the reaction N-terminal L-alanyl-L-prolyl-L-lysyl-[protein] + 3 S-adenosyl-L-methionine = N-terminal N,N,N-trimethyl-L-alanyl-L-prolyl-L-lysyl-[protein] + 3 S-adenosyl-L-homocysteine + 3 H(+). It carries out the reaction N-terminal L-seryl-L-prolyl-L-lysyl-[protein] + 3 S-adenosyl-L-methionine = N-terminal N,N,N-trimethyl-L-seryl-L-prolyl-L-lysyl-[protein] + 3 S-adenosyl-L-homocysteine + 3 H(+). The enzyme catalyses N-terminal L-prolyl-L-prolyl-L-lysyl-[protein] + 2 S-adenosyl-L-methionine = N-terminal N,N-dimethyl-L-prolyl-L-prolyl-L-lysyl-[protein] + 2 S-adenosyl-L-homocysteine + 2 H(+). In terms of biological role, distributive alpha-N-methyltransferase that methylates the N-terminus of target proteins containing the N-terminal motif [Ala/Gly/Pro/Ser]-Pro-Lys when the initiator Met is cleaved. Specifically catalyzes mono-, di- or tri-methylation of the exposed alpha-amino group of the Ala, Gly or Ser residue in the [Ala/Gly/Ser]-Pro-Lys motif and mono- or di-methylation of Pro in the Pro-Pro-Lys motif. Required during mitosis for normal bipolar spindle formation and chromosome segregation via its action on target proteins. The chain is N-terminal Xaa-Pro-Lys N-methyltransferase 1 (ntmt1) from Xenopus tropicalis (Western clawed frog).